Consider the following 524-residue polypeptide: Cytochrome P450 monooxygenase oblB (524 aa).

A run of 3 helical transmembrane segments spans residues 18 to 38 (ILNA…GLVI), 225 to 245 (FHSG…IHLI), and 322 to 342 (VLIG…VYYI). A heme-binding site is contributed by Cys466.

The protein belongs to the cytochrome P450 family. Heme is required as a cofactor.

It localises to the membrane. The catalysed reaction is ophiobolin F + 4 reduced [NADPH--hemoprotein reductase] + 4 O2 = ophiobolin C + 4 oxidized [NADPH--hemoprotein reductase] + 6 H2O + 4 H(+). Its pathway is secondary metabolite biosynthesis; terpenoid biosynthesis. In terms of biological role, cytochrome P450 monooxygenase; part of the gene cluster that mediates the biosynthesis of the sesterterpenes ophiobolins, fungal phytotoxins with potential anti-cancer activities. The first step of the pathway is performed by the sesterterpene synthase oblA that possesses both prenyl transferase and terpene cyclase activity, converting isopentenyl diphosphate and dimethylallyl diphosphate into geranylfarnesyl diphosphate (GFPP) and further converting GFPP into ophiobolin F, respectively. Other sesterterpenoids (C(25) terpenoids) are found as minor products of oblA. The cytochrome P450 monooxygenase oblB then catalyzes a four-step oxidative transformation of ophiobolin F to yield ophiobolin C. The FAD-dependent oxidoreductase oblC might be involved in a later oxidation step that produces ophiobolin A. This Cochliobolus heterostrophus (strain C5 / ATCC 48332 / race O) (Southern corn leaf blight fungus) protein is Cytochrome P450 monooxygenase oblB.